A 313-amino-acid chain; its full sequence is Metaxin-3 (313 aa).

Residues 280–313 (EKMDDNLRSSPQHRPHRHEAKPSAPASDRNSTPA) form a disordered region.

This sequence belongs to the metaxin family. Part of a large protein complex spanning both mitochondrial membranes termed the mitochondrial intermembrane space bridging (MIB) complex.

It localises to the mitochondrion. It is found in the mitochondrion outer membrane. In terms of biological role, could function in transport of proteins into the mitochondrion. The chain is Metaxin-3 (mtx3) from Danio rerio (Zebrafish).